We begin with the raw amino-acid sequence, 359 residues long: Protein trichome birefringence-like 42 (359 aa).

The helical; Signal-anchor for type II membrane protein transmembrane segment at 7 to 25 (LFLLLLIFLVDLSDYGVLA) threads the bilayer. The short motif at 110 to 112 (GDS) is the GDS motif element. The short motif at 335–349 (DCSHWCLPGVPDAWN) is the DCXHWCLPGXXDXWN motif element.

Belongs to the PC-esterase family. TBL subfamily.

The protein localises to the membrane. May act as a bridging protein that binds pectin and other cell wall polysaccharides. Probably involved in maintaining esterification of pectins. May be involved in the specific O-acetylation of cell wall polymers. The sequence is that of Protein trichome birefringence-like 42 (TBL42) from Arabidopsis thaliana (Mouse-ear cress).